The chain runs to 292 residues: Phosphatidylglycerol--prolipoprotein diacylglyceryl transferase (292 aa).

3 helical membrane-spanning segments follow: residues 18 to 38 (LFGV…GLLI), 67 to 87 (LLTW…VLFY), and 105 to 125 (GGMS…AFCL). Arginine 150 contributes to the a 1,2-diacyl-sn-glycero-3-phospho-(1'-sn-glycerol) binding site. 3 helical membrane passes run 193-213 (QIYE…LLVW), 222-242 (GSVS…VEFV), and 266-286 (GLTM…YLIL).

It belongs to the Lgt family.

The protein resides in the cell inner membrane. It carries out the reaction L-cysteinyl-[prolipoprotein] + a 1,2-diacyl-sn-glycero-3-phospho-(1'-sn-glycerol) = an S-1,2-diacyl-sn-glyceryl-L-cysteinyl-[prolipoprotein] + sn-glycerol 1-phosphate + H(+). It functions in the pathway protein modification; lipoprotein biosynthesis (diacylglyceryl transfer). Functionally, catalyzes the transfer of the diacylglyceryl group from phosphatidylglycerol to the sulfhydryl group of the N-terminal cysteine of a prolipoprotein, the first step in the formation of mature lipoproteins. This chain is Phosphatidylglycerol--prolipoprotein diacylglyceryl transferase, found in Cereibacter sphaeroides (strain ATCC 17029 / ATH 2.4.9) (Rhodobacter sphaeroides).